The following is a 268-amino-acid chain: Virulence plasmid ParA family protein pGP5-D (268 aa).

13 to 20 (FKGGTGKT) is a binding site for ATP.

It belongs to the ParA family.

In Chlamydia muridarum (strain MoPn / Nigg), this protein is Virulence plasmid ParA family protein pGP5-D.